Consider the following 359-residue polypeptide: Type-1 angiotensin II receptor (359 aa).

Residues 1–25 (MILNSSTEDGIKRIQDDCPKAGRHN) are Extracellular-facing. N-linked (GlcNAc...) asparagine glycosylation occurs at N4. Positions 15 and 17 each coordinate angiotensin II. 2 disulfides stabilise this stretch: C18–C274 and C101–C180. The helical transmembrane segment at 26–55 (YIFIMIPTLYSIIFVVGLFGNSLVVIVIYF) threads the bilayer. Residues 56-61 (YMKLKT) lie on the Cytoplasmic side of the membrane. Residues 62-89 (VASVFLLNLALADLCFLLTLPLWAVYTA) traverse the membrane as a helical segment. Topologically, residues 90-98 (MEYRWPFGN) are extracellular. A helical membrane pass occupies residues 99–125 (YLCKIASGSVSFNLYASVFLLTCLSID). Residues 126-141 (RYLAIVHPMKSRLRRT) lie on the Cytoplasmic side of the membrane. A helical membrane pass occupies residues 142 to 165 (MLVAKVTCIIIWLLAGLASLPTII). The Extracellular portion of the chain corresponds to 166–190 (HRNVFFIENTNITVCAFHYESQNST). Residue R167 coordinates angiotensin II. Residue N176 is glycosylated (N-linked (GlcNAc...) asparagine). Angiotensin II is bound by residues F182, H183, and Y184. N-linked (GlcNAc...) asparagine glycosylation occurs at N188. Residues 191–216 (LPVGLGLTKNILGFLFPFLIILTSYT) form a helical membrane-spanning segment. K199 is a binding site for angiotensin II. Over 217–239 (LIWKTLKKAYEIQKNKPRKDDIF) the chain is Cytoplasmic. Residues 240-268 (KIILAIVLFFFFSWVPHQIFTFMDVLIQL) form a helical membrane-spanning segment. Over 269–278 (GLIRDCKIED) the chain is Extracellular. A helical membrane pass occupies residues 279–304 (IVDTAMPITICLAYFNNCLNPPFYGF). Topologically, residues 305–359 (LGKKFKKYFLQLLKYIPPKAKSHSNLSTKMSTLSYRPSENGNSSTKKPAPCTEVE) are cytoplasmic. Positions 335-350 (STLSYRPSENGNSSTK) are enriched in polar residues. The disordered stretch occupies residues 335 to 359 (STLSYRPSENGNSSTKKPAPCTEVE). The S-palmitoyl cysteine moiety is linked to residue C355.

This sequence belongs to the G-protein coupled receptor 1 family. In terms of assembly, interacts with MAS1. Interacts with ARRB1. Interacts with FLNA (via filamin repeat 21); increases PKA-mediated phosphorylation of FLNA. Post-translationally, C-terminal Ser or Thr residues may be phosphorylated.

It localises to the cell membrane. Its function is as follows. Receptor for angiotensin II, a vasoconstricting peptide, which acts as a key regulator of blood pressure and sodium retention by the kidney. The activated receptor in turn couples to G-alpha proteins G(q) (GNAQ, GNA11, GNA14 or GNA15) and thus activates phospholipase C and increases the cytosolic Ca(2+) concentrations, which in turn triggers cellular responses such as stimulation of protein kinase C. This Ovis aries (Sheep) protein is Type-1 angiotensin II receptor (AGTR1).